Reading from the N-terminus, the 460-residue chain is Hydroxymethylglutaryl-CoA synthase MYCGRDRAFT_54740 (460 aa).

Position 35 (Ala35) interacts with (3S)-3-hydroxy-3-methylglutaryl-CoA. The active-site Proton donor/acceptor is Glu86. (3S)-3-hydroxy-3-methylglutaryl-CoA is bound by residues Cys120, Asn158, Thr162, Ser212, His262, Lys271, Asn339, and Ser373. Cys120 serves as the catalytic Acyl-thioester intermediate. His262 (proton donor/acceptor) is an active-site residue.

The protein belongs to the thiolase-like superfamily. HMG-CoA synthase family.

The catalysed reaction is acetoacetyl-CoA + acetyl-CoA + H2O = (3S)-3-hydroxy-3-methylglutaryl-CoA + CoA + H(+). It functions in the pathway siderophore biosynthesis. Its function is as follows. Hydroxymethylglutaryl-CoA synthase involved in the biosynthesis of a ferrichrome A-like siderophors which may contribute to organismal virulence. The first step of siderophore biosynthesis is performed by the HMG-CoA synthase (HMGS) MYCGRDRAFT_54740 which catalyzes the generation of HMG-CoA and CoA using acetoacetyl-CoA and acetyl-CoA as substrates. The enoyl-CoA isomerase/hydratase MYCGRDRAFT_76805 then catalyzes the conversion of HMG-CoA to methylglutaconyl-CoA. The acyltransferase MYCGRDRAFT_85486 then fuses methylglutaconyl-CoA with hydroxyornithine to yield methylglutaconyl hydroxyornithine. Methylglutaconyl hydroxyornithine is then available for use by the nonribosomal peptide synthetase NRPS2 to generate the ferrichrome A-like siderophore. The chain is Hydroxymethylglutaryl-CoA synthase MYCGRDRAFT_54740 (ERG13) from Zymoseptoria tritici (strain CBS 115943 / IPO323) (Speckled leaf blotch fungus).